Consider the following 236-residue polypeptide: Orotidine 5'-phosphate decarboxylase (236 aa).

Residues Asp-11, Lys-33, Asp-60–Thr-69, Thr-119, Arg-181, Gln-190, Gly-210, and Arg-211 each bind substrate. The active-site Proton donor is the Lys-62.

Belongs to the OMP decarboxylase family. Type 1 subfamily. As to quaternary structure, homodimer.

The catalysed reaction is orotidine 5'-phosphate + H(+) = UMP + CO2. It participates in pyrimidine metabolism; UMP biosynthesis via de novo pathway; UMP from orotate: step 2/2. In terms of biological role, catalyzes the decarboxylation of orotidine 5'-monophosphate (OMP) to uridine 5'-monophosphate (UMP). The chain is Orotidine 5'-phosphate decarboxylase from Cutibacterium acnes (strain DSM 16379 / KPA171202) (Propionibacterium acnes).